Consider the following 141-residue polypeptide: Putative antiporter subunit mnhB2 (141 aa).

Transmembrane regions (helical) follow at residues 10 to 30 (TVTK…FFAG), 35 to 55 (GGGF…FLAF), 70 to 90 (ILMI…TFFG), and 114 to 134 (ITLF…TVML).

Belongs to the CPA3 antiporters (TC 2.A.63) subunit B family. May form a heterooligomeric complex that consists of seven subunits: mnhA2, mnhB2, mnhC2, mnhD2, mnhE2, mnhF2 and mnhG2.

The protein resides in the cell membrane. The sequence is that of Putative antiporter subunit mnhB2 (mnhB2) from Staphylococcus aureus (strain MRSA252).